The following is a 343-amino-acid chain: Isopentenyl-diphosphate delta-isomerase (343 aa).

9-10 contributes to the substrate binding site; sequence RK. FMN is bound by residues Ser66, 67–69, Ser98, and Asn126; that span reads SMT. 98 to 100 is a substrate binding site; sequence SQR. Gln161 is a binding site for substrate. Glu162 serves as a coordination point for Mg(2+). FMN contacts are provided by residues Lys193, Thr223, 273-275, and 294-295; these read GIR and AA.

It belongs to the IPP isomerase type 2 family. Homooctamer. Dimer of tetramers. FMN serves as cofactor. NADPH is required as a cofactor. It depends on Mg(2+) as a cofactor.

It is found in the cytoplasm. It catalyses the reaction isopentenyl diphosphate = dimethylallyl diphosphate. Functionally, involved in the biosynthesis of isoprenoids. Catalyzes the 1,3-allylic rearrangement of the homoallylic substrate isopentenyl (IPP) to its allylic isomer, dimethylallyl diphosphate (DMAPP). The sequence is that of Isopentenyl-diphosphate delta-isomerase from Hydrogenovibrio crunogenus (strain DSM 25203 / XCL-2) (Thiomicrospira crunogena).